We begin with the raw amino-acid sequence, 252 residues long: Imidazole glycerol phosphate synthase subunit HisF (252 aa).

Catalysis depends on residues aspartate 11 and aspartate 130.

Belongs to the HisA/HisF family. Heterodimer of HisH and HisF.

It localises to the cytoplasm. It carries out the reaction 5-[(5-phospho-1-deoxy-D-ribulos-1-ylimino)methylamino]-1-(5-phospho-beta-D-ribosyl)imidazole-4-carboxamide + L-glutamine = D-erythro-1-(imidazol-4-yl)glycerol 3-phosphate + 5-amino-1-(5-phospho-beta-D-ribosyl)imidazole-4-carboxamide + L-glutamate + H(+). It participates in amino-acid biosynthesis; L-histidine biosynthesis; L-histidine from 5-phospho-alpha-D-ribose 1-diphosphate: step 5/9. Its function is as follows. IGPS catalyzes the conversion of PRFAR and glutamine to IGP, AICAR and glutamate. The HisF subunit catalyzes the cyclization activity that produces IGP and AICAR from PRFAR using the ammonia provided by the HisH subunit. The chain is Imidazole glycerol phosphate synthase subunit HisF from Bacillus thuringiensis (strain Al Hakam).